A 57-amino-acid polypeptide reads, in one-letter code: Large ribosomal subunit protein bL32A (57 aa).

It belongs to the bacterial ribosomal protein bL32 family.

This Streptomyces coelicolor (strain ATCC BAA-471 / A3(2) / M145) protein is Large ribosomal subunit protein bL32A (rpmF1).